A 216-amino-acid polypeptide reads, in one-letter code: Thymidylate kinase (216 aa).

10-17 (GIDGCGKT) contacts ATP.

It belongs to the thymidylate kinase family.

It catalyses the reaction dTMP + ATP = dTDP + ADP. Phosphorylation of dTMP to form dTDP in both de novo and salvage pathways of dTTP synthesis. This is Thymidylate kinase from Prochlorococcus marinus (strain MIT 9303).